Here is a 137-residue protein sequence, read N- to C-terminus: Sec-independent protein translocase protein TatB (137 aa).

A helical transmembrane segment spans residues 2–22 (FANIGWGEMLILVIAGLVILG). The interval 92 to 137 (FFTGKFDQQNGKPAAGQEKPVTPVNPPVTATPPSESTATPFDSDAT) is disordered. Positions 122-131 (TPPSESTATP) are enriched in low complexity.

The protein belongs to the TatB family. The Tat system comprises two distinct complexes: a TatABC complex, containing multiple copies of TatA, TatB and TatC subunits, and a separate TatA complex, containing only TatA subunits. Substrates initially bind to the TatABC complex, which probably triggers association of the separate TatA complex to form the active translocon.

It localises to the cell membrane. In terms of biological role, part of the twin-arginine translocation (Tat) system that transports large folded proteins containing a characteristic twin-arginine motif in their signal peptide across membranes. Together with TatC, TatB is part of a receptor directly interacting with Tat signal peptides. TatB may form an oligomeric binding site that transiently accommodates folded Tat precursor proteins before their translocation. The chain is Sec-independent protein translocase protein TatB from Mycobacterium sp. (strain JLS).